Here is a 97-residue protein sequence, read N- to C-terminus: MASSAELDFNLQALLEQLSQDELSKFKSLIRTISLGKELQTVPQTEVDKANGKQLVEIFTSHSCSYWAGMAAIQVFEKMNQTHLSGRADEHCVMPPP.

Positions 1–94 (MASSAELDFN…SGRADEHCVM (94 aa)) constitute a Pyrin domain.

As to quaternary structure, interacts with PYCARD/ASC (via pyrin domain). Interacts with NLRP2 (via pyrin domain). In terms of tissue distribution, predominantly expressed in peripheral blood. Weakly expressed in testis.

It localises to the cytoplasm. Its subcellular location is the nucleus. Functionally, may play a role in innate immunity by disrupting the interaction between PYCARD and NLRP3, thereby regulating the NLRP3 inflammasome. May also inhibit NF-kappa-B signaling distally by affecting the nuclear accumulation of RELA. This is Pyrin domain-containing protein 2 from Homo sapiens (Human).